A 286-amino-acid polypeptide reads, in one-letter code: Large ribosomal subunit protein uL3 (286 aa).

Position 152 is an N5-methylglutamine (glutamine 152). A compositionally biased stretch (low complexity) spans 246–265 (EAAAAAAAAEEQAAMEAAEA). A disordered region spans residues 246-286 (EAAAAAAAAEEQAAMEAAEAAEAKTDTVAEAEAAEKKEGDA). Residues 266 to 286 (AEAKTDTVAEAEAAEKKEGDA) show a composition bias toward basic and acidic residues.

The protein belongs to the universal ribosomal protein uL3 family. In terms of assembly, part of the 50S ribosomal subunit. Forms a cluster with proteins L14 and L19. In terms of processing, methylated by PrmB.

Its function is as follows. One of the primary rRNA binding proteins, it binds directly near the 3'-end of the 23S rRNA, where it nucleates assembly of the 50S subunit. The polypeptide is Large ribosomal subunit protein uL3 (Roseobacter denitrificans (strain ATCC 33942 / OCh 114) (Erythrobacter sp. (strain OCh 114))).